Consider the following 198-residue polypeptide: Inositol diphosphatase DSP4 (198 aa).

The disordered stretch occupies residues 1 to 23; sequence MTLESYAGDVHTVPQSENSMEER. One can recognise a Tyrosine-protein phosphatase domain in the interval 34–188; that stretch reads NFAMVDNGIF…LKHTPLSFSC (155 aa). The segment at 90-102 is WPD loop important for active site topology; sequence FGIERCKEPFVNI. 1D-myo-inositol hexakisphosphate is bound by residues Asn-101 and Ile-102. Cys-126 functions as the Phosphocysteine intermediate in the catalytic mechanism.

This sequence belongs to the protein-tyrosine phosphatase family. Atypical dual-specificity phosphatase Siw14-like subfamily. Highly expressed in flowers and at lower levels in roots, leaves, stems and siliques.

The enzyme catalyses 5-diphospho-1D-myo-inositol 1,2,3,4,6-pentakisphosphate + H2O = 1D-myo-inositol hexakisphosphate + phosphate + H(+). It carries out the reaction 1,5-bis(diphospho)-1D-myo-inositol 2,3,4,6-tetrakisphosphate + H2O = 1-diphospho-1D-myo-inositol 2,3,4,5,6-pentakisphosphate + phosphate + 2 H(+). It catalyses the reaction 3,5-bis(diphospho)-1D-myo-inositol 1,2,4,6-tetrakisphosphate + H2O = 3-diphospho-1D-myo-inositol 1,2,4,5,6-pentakisphosphate + phosphate + 2 H(+). The catalysed reaction is 6-diphospho-1D-myo-inositol pentakisphosphate + H2O = 1D-myo-inositol hexakisphosphate + phosphate + H(+). In terms of biological role, cleaves the beta-phosphate at the 5-position of soluble inositol pyrophosphates. Has highest activity on 5-diphosphoinositol 1,2,3,4,6-pentakisphosphate (5-InsP(7)), 1,5-bis-diphosphoinositol 2,3,4,6-tetrakisphosphate (1,5-InsP(8)) and 3,5-InsP(8). Acts as a negative regulator of defense responses against the bacterial pathogen Pseudomonas syringae pv tomato strain DC3000. This is Inositol diphosphatase DSP4 from Arabidopsis thaliana (Mouse-ear cress).